The sequence spans 520 residues: Versicolorin B desaturase (520 aa).

The helical transmembrane segment at 22–42 (IFTTILSIFGIALSAVAAWGI) threads the bilayer. Asparagine 266 and asparagine 426 each carry an N-linked (GlcNAc...) asparagine glycan. Cysteine 462 lines the heme pocket.

Belongs to the cytochrome P450 family. It depends on heme as a cofactor.

It localises to the membrane. The enzyme catalyses versicolorin B + NADPH + O2 + H(+) = versicolorin A + NADP(+) + 2 H2O. It participates in mycotoxin biosynthesis. In terms of biological role, versicolorin B desaturase; part of the fragmented gene cluster that mediates the biosynthesis of dothistromin (DOTH), a polyketide toxin very similar in structure to the aflatoxin precursor, versicolorin B. The first step of the pathway is the conversion of acetate to norsolorinic acid (NOR) and requires the fatty acid synthase subunits hexA and hexB, as well as the polyketide synthase pksA. PksA combines a hexanoyl starter unit and 7 malonyl-CoA extender units to synthesize the precursor NOR. The hexanoyl starter unit is provided to the acyl-carrier protein (ACP) domain by the fungal fatty acid synthase hexA/hexB. The second step is the conversion of NOR to averantin (AVN) and requires the norsolorinic acid ketoreductase nor1, which catalyzes the dehydration of norsolorinic acid to form (1'S)-averantin. The cytochrome P450 monooxygenase avnA then catalyzes the hydroxylation of AVN to 5'hydroxyaverantin (HAVN). The next step is performed by adhA that transforms HAVN to averufin (AVF). Averufin might then be converted to hydroxyversicolorone by cypX and avfA. Hydroxyversicolorone is further converted versiconal hemiacetal acetate (VHA) by moxY. VHA is then the substrate for the versiconal hemiacetal acetate esterase est1 to yield versiconal (VAL). Versicolorin B synthase vbsA then converts VAL to versicolorin B (VERB) by closing the bisfuran ring. Then, the activity of the versicolorin B desaturase verB leads to versicolorin A (VERA). DotB, a predicted chloroperoxidase, may perform epoxidation of the A-ring of VERA. Alternatively, a cytochrome P450, such as cypX or avnA could catalyze this step. It is also possible that another, uncharacterized, cytochrome P450 enzyme is responsible for this step. Opening of the epoxide could potentially be achieved by the epoxide hydrolase epoA. However, epoA seems not to be required for DOTH biosynthesis, but other epoxide hydrolases may have the ability to complement this hydrolysis. Alternatively, opening of the epoxide ring could be achieved non-enzymatically. The next step is the deoxygenation of ring A to yield the 5,8-dihydroxyanthraquinone which is most likely catalyzed by the NADPH dehydrogenase encoded by ver1. The last stages of DOTH biosynthesis are proposed to involve hydroxylation of the bisfuran. OrdB and norB might have oxidative roles here. An alternative possibility is that cytochrome P450 monoogenases such as avnA and cypX might perform these steps in addition to previously proposed steps. This is Versicolorin B desaturase from Dothistroma septosporum (strain NZE10 / CBS 128990) (Red band needle blight fungus).